The primary structure comprises 396 residues: MKSTIFFILSLLLMLENQAAGRRLSGSAGAQDPVISRVWAKSQDMEEAVSGSGLTAEGGRGSDREESVGERVSLRQEEFEKGHIRSSVEEPEGEHVSVRREHLEKSHIRHNVEEPEGERVSVRREHLEKSHIRHSAEEPEGERVSVRHERVEKTHKRFHDDSVEESDSASSVDHRKKGHIRFKRQDPIAALAAIEGQDAVKDSLWVKGQASSEERFSVKGQDLVKGHLQMKGQSSLAERFSVTGQDSVKGRLQMKGQDTLAERFSMTGQDSVKSRLQMKGQDSLSERFSMTGQDSVKGRLQMKGQSSLAERFSVTGQDSVKGRLQMKGKDTLAERFSVTGQDSVKGRLQMKGHDLLEERFSVSGQDSVKGLARIKGQESVQSGFSVKGQGSLKGLI.

Residues 1 to 21 form the signal peptide; that stretch reads MKSTIFFILSLLLMLENQAAG. The interval 45–178 is disordered; it reads MEEAVSGSGL…ASSVDHRKKG (134 aa). The span at 60 to 152 shows a compositional bias: basic and acidic residues; sequence RGSDREESVG…RVSVRHERVE (93 aa). SVP-3/-4 repeat repeat units follow at residues 65 to 88, 89 to 112, and 113 to 136; these read EESV…RSSV, EEPE…RHNV, and EEPE…RHSA. The SVP-3/-4 repeat; truncated repeat unit spans residues 137 to 157; that stretch reads EEPEGERVSVRHERVEKTHKR. Positions 177–192 are excised as a propeptide; that stretch reads KGHIRFKRQDPIAALA. 8 SVP-1 clotting repeats span residues 194-217, 218-241, 242-265, 266-289, 290-313, 314-337, 338-361, and 362-385; these read IEGQ…ERFS, VKGQ…ERFS, VTGQ…ERFS, MTGQ…ERFS, and VSGQ…SGFS. Residues 194 to 396 form a 9 X tandem repeats of SVP-1 like motif region; it reads IEGQDAVKDS…KGQGSLKGLI (203 aa). The interval 377 to 396 is disordered; that stretch reads QESVQSGFSVKGQGSLKGLI. The stretch at 386 to 396 is one SVP-1 clotting 9; truncated repeat; the sequence is VKGQGSLKGLI.

This sequence to the SVP-2 precursor, particularly in regions where protein processing must occur. Post-translationally, SVP-3 may be a post-translationally modified form of SVP-4. In terms of processing, covalent clotting of SVP-1 is catalyzed by a transglutaminase secreted by the anterior prostate through the formation of gamma-glutamyl-epsilon-lysine cross-links. The conserved 2 Lys and 1 Gln residues per functional unit seem to be the residues involved in the formation of those cross-links.

Its subcellular location is the secreted. Its function is as follows. SVP-1 serves as substrate in the formation of the copulatory plug. SVP-3 and SVP-4 may also contribute to the clot. In Cavia porcellus (Guinea pig), this protein is Seminal vesicle major clotting proteins.